Consider the following 257-residue polypeptide: MSILFYVIFLAYLRGIQSTNMDQRSLPEDSMNSLIIKLIRADILKNKLSKQVMDVKENYQNIVQKVEDHQEMDGDENVKSDFQPVISMDTDLLRQQRRYNSPRVLLSDNTPLEPPPLYLTEDYVGSSVVLNRTSRRKRYAEHKSHRGEYSVCDSESLWVTDKSSAIDIRGHQVTVLGEIKTGNSPVKQYFYETRCKEAKPVKNGCRGIDDKHWNSQCKTSQTYVRALTSENNKLVGWRWIRIDTSCVCALSRKIGRT.

The N-terminal stretch at 1–18 (MSILFYVIFLAYLRGIQS) is a signal peptide. Positions 19-138 (TNMDQRSLPE…VLNRTSRRKR (120 aa)) are excised as a propeptide. An N-linked (GlcNAc...) asparagine glycan is attached at N131. 3 disulfides stabilise this stretch: C152–C217, C195–C246, and C205–C248.

This sequence belongs to the NGF-beta family. As to expression, in the embryo, the expression peak at E4.5 and decreases at later stages of development.

It localises to the secreted. Its function is as follows. Seems to promote the survival of visceral and proprioceptive sensory neurons. This is Neurotrophin-3 (NTF3) from Gallus gallus (Chicken).